Reading from the N-terminus, the 243-residue chain is Probable transcriptional regulatory protein LJ_0904 (243 aa).

The segment at 1–22 (MSGHSKWHNIQGRKNAQDAKRG) is disordered.

The protein belongs to the TACO1 family.

It localises to the cytoplasm. The sequence is that of Probable transcriptional regulatory protein LJ_0904 from Lactobacillus johnsonii (strain CNCM I-12250 / La1 / NCC 533).